Here is a 411-residue protein sequence, read N- to C-terminus: Phosphoglycerate kinase (411 aa).

Residues 19–21 (DLN), arginine 34, 57–60 (HQSR), arginine 114, and arginine 154 each bind substrate. Residues glutamate 332 and 358–361 (GGHS) contribute to the ATP site.

Belongs to the phosphoglycerate kinase family. Monomer.

The protein resides in the cytoplasm. It catalyses the reaction (2R)-3-phosphoglycerate + ATP = (2R)-3-phospho-glyceroyl phosphate + ADP. Its pathway is carbohydrate degradation; glycolysis; pyruvate from D-glyceraldehyde 3-phosphate: step 2/5. The polypeptide is Phosphoglycerate kinase (Thermococcus kodakarensis (strain ATCC BAA-918 / JCM 12380 / KOD1) (Pyrococcus kodakaraensis (strain KOD1))).